We begin with the raw amino-acid sequence, 494 residues long: Alpha-amylase-related protein (494 aa).

The signal sequence occupies residues 1–20 (MFKFALALTLCLAGASLSLA). The residue at position 21 (glutamine 21) is a Pyrrolidone carboxylic acid. Cysteine 48 and cysteine 104 are disulfide-bonded. Residues asparagine 118, glutamine 169, and aspartate 178 each contribute to the Ca(2+) site. Cysteine 157 and cysteine 171 are oxidised to a cystine. Arginine 206 is a binding site for chloride. Catalysis depends on aspartate 208, which acts as the Nucleophile. Residue histidine 212 participates in Ca(2+) binding. Glutamate 245 (proton donor) is an active-site residue. Chloride is bound by residues asparagine 308 and arginine 343. Disulfide bonds link cysteine 376–cysteine 382, cysteine 418–cysteine 441, and cysteine 448–cysteine 460.

It belongs to the glycosyl hydrolase 13 family. In terms of assembly, monomer. Ca(2+) serves as cofactor. Chloride is required as a cofactor.

The protein localises to the secreted. It carries out the reaction Endohydrolysis of (1-&gt;4)-alpha-D-glucosidic linkages in polysaccharides containing three or more (1-&gt;4)-alpha-linked D-glucose units.. This is Alpha-amylase-related protein (Amyrel) from Drosophila punjabiensis (Fruit fly).